Reading from the N-terminus, the 445-residue chain is MSNRKYFGTDGIRGRVGDAPITPDFVLKLGWAAGKVLARHGSRKIIIGKDTRISGYMLESALEAGLAAAGLSALFTGPMPTPAVAYLTRTFRAEAGIVISASHNPFYDNGIKFFSIDGTKLPDAVEEAIEAEMEKEISCVDSAELGKASRIVDAAGRYIEFCKATFPNELSLSELKIVVDCANGATYHIAPNVLRELGANVIAIGCEPNGVNINAEVGATDVRALQARVLAEKADLGIAFDGDGDRVIMVDHEGNKVDGDQSMYIIAREGLRQGQLRGGAVGTLMSNMGLELALKQLGIPFARAKVGDRYVLEKMQEKGWRIGAENSGHVILLDKTTTGDGIVAGLQVLAAMARNHMSLHDLCSGMKMFPQILVNVRYTAGSGDPLEHESVKAVTAEVEAALGNRGRVLLRKSGTEPLIRVMVEGEDEAQVTEFAHRIADAVKAV.

Ser102 functions as the Phosphoserine intermediate in the catalytic mechanism. The Mg(2+) site is built by Ser102, Asp241, Asp243, and Asp245. A Phosphoserine modification is found at Ser102.

This sequence belongs to the phosphohexose mutase family. The cofactor is Mg(2+). Activated by phosphorylation.

The enzyme catalyses alpha-D-glucosamine 1-phosphate = D-glucosamine 6-phosphate. In terms of biological role, catalyzes the conversion of glucosamine-6-phosphate to glucosamine-1-phosphate. This chain is Phosphoglucosamine mutase, found in Shigella flexneri serotype 5b (strain 8401).